A 359-amino-acid polypeptide reads, in one-letter code: FKRAVEGQHNYLCAGRNDCIIDKIRRKNCPACRVRKCLQAGMNLGARKSKKPGKLKGVNEDSTPTKEGGQTCPGSGGGYLSSGEKELSTSPTNALVPHGPGGGLVTPYLPPSICSVLELIEPEVVFAGYDNTQPDTTDHLLSSLNQLAGKQMIRVVKWAKVLPGFRGLPIEDQITLIQYSWMCLSSFSLSWRSYKHTNGQMLYFAPDLVFNEDRMQQSAMYDLCLGMRQVSQEFVRLQLTYQEFLSMKVLLLLSTVPKEGLKNQAAFEEMRVNYIKELRRSVGKAPTTLDRRGNRSSQLTKLLDAMHDLGGELLDFCFYTFRESQALKVEFPEMLVEIISDQIPKVESGNTHTLYFHKK.

The nuclear receptor DNA-binding region spans 1-49; that stretch reads FKRAVEGQHNYLCAGRNDCIIDKIRRKNCPACRVRKCLQAGMNLGARKS. Residues cysteine 13, cysteine 19, cysteine 29, and cysteine 32 each coordinate Zn(2+). The segment at 13-37 adopts an NR C4-type zinc-finger fold; that stretch reads CAGRNDCIIDKIRRKNCPACRVRKC. The disordered stretch occupies residues 48–96; that stretch reads KSKKPGKLKGVNEDSTPTKEGGQTCPGSGGGYLSSGEKELSTSPTNALV. Residues 50–107 are hinge; that stretch reads KKPGKLKGVNEDSTPTKEGGQTCPGSGGGYLSSGEKELSTSPTNALVPHGPGGGLVTP. Residues 108–339 enclose the NR LBD domain; that stretch reads YLPPSICSVL…EFPEMLVEII (232 aa). 21-hydroxyprogesterone contacts are provided by asparagine 145 and glutamine 151. Residues asparagine 145 and glutamine 151 each contribute to the aldosterone site. Residues asparagine 145 and glutamine 151 each coordinate progesterone. Residues 157–160 are important for coactivator binding; the sequence is KWAK. 2 residues coordinate 21-hydroxyprogesterone: arginine 192 and threonine 320. 2 residues coordinate aldosterone: arginine 192 and threonine 320. Residues arginine 192 and threonine 320 each contribute to the progesterone site.

The protein belongs to the nuclear hormone receptor family. NR3 subfamily.

The protein resides in the cytoplasm. It is found in the nucleus. Receptor for both mineralocorticoids (MC) such as cortisol. Binds to mineralocorticoid response elements (MRE) and transactivates target genes. The effect of MC is to increase ion and water transport and thus raise extracellular fluid volume and blood pressure and lower potassium levels. In Oncorhynchus mykiss (Rainbow trout), this protein is Mineralocorticoid receptor (nr3c2).